Here is a 1217-residue protein sequence, read N- to C-terminus: METSSISTVEDKPPQHQVFINFRGADLRRRFVSHLVTALKLNNINVFIDDYEDRGQPLDVLLKRIEESKIVLAIFSGNYTESVWCVRELEKIKDCTDEGTLVAIPIFYKLEPSTVRDLKGKFGDRFRSMAKGDERKKKWKEAFNLIPNIMGITIDKKSVESEKVNEIVKAVKTALTGIPPEGSHNAVVGALGNSNAGTSSGDKKHETFGNEQRLKDLEEKLDRDKYKGTRIIGVVGMPGIGKTTLLKELYKTWQGKFSRHALIDQIRVKSKHLELDRLPQMLLGELSKLNNPHVDNLKDPYSQLHERKVLVVLDDVSKREQIDALREILDWIKEGKEGSRVVIATSDMSLTNGLVDDTYMVQNLNHRDSLQLFHYHAFIDDQANPQKKDFMKLSEGFVHYARGHPLALKVLGGELNKKSMDHWNSKMKKLAQSPSPNIVSVFQVSYDELTTAQKDAFLDIACFRSQDKDYVESLLASSDLGSAEAMSAVKSLTDKFLINTCDGRVEMHDLLYKFSREIDLKASNQDGSRQRRLWLHQHIIKGGIINVLQNKMKAANVRGIFLDLSEVEDETSLDRDHFINMGNLRYLKFYNSHCPQECKTNNKINIPDKLKLPLKEVRCLHWLKFPLETLPNDFNPINLVDLKLPYSEMEQLWEGDKDTPCLRWVDLNHSSKLCSLSGLSKAEKLQRLNLEGCTTLKAFPHDMKKMKMLAFLNLKGCTSLESLPEMNLISLKTLTLSGCSTFKEFPLISDNIETLYLDGTAISQLPMNMEKLQRLVVLNMKDCKMLEEIPGRVGELKALQELILSDCLNLKIFPEIDISFLNILLLDGTAIEVMPQLPSVQYLCLSRNAKISCLPVGISQLSQLKWLDLKYCTSLTSVPEFPPNLQCLDAHGCSSLKTVSKPLARIMPTEQNHSTFIFTNCENLEQAAKEEITSYAQRKCQLLSYARKRYNGGLVSESLFSTCFPGCEVPSWFCHETVGSELEVKLLPHWHDKKLAGIALCAVVSCLDPQDQVSRLSVTCTFKVKDEDKSWVPYTCPVGSWTRHGGGKDKIELDHVFIGYTSCPHTIKCHEEGNSDECNPTEASLKFTVTGGTSENGKYKVLKCGLSLVYAKDKDKNSALETKYDMLIGKSFQETSEGVDGRVKKTKGKYVMPVEKNFQETTEGVDGRVKKKKKTRMDNGRPKKKQRSGRDDNQTRMQVELQEGNINSVIMHTVKNF.

Positions 14-175 constitute a TIR domain; it reads PQHQVFINFR…EIVKAVKTAL (162 aa). The active site involves E88. The region spanning 211–472 is the NB-ARC domain; the sequence is EQRLKDLEEK…FRSQDKDYVE (262 aa). LRR repeat units lie at residues 260–285, 436–459, 614–636, 637–659, 682–706, 708–728, 729–749, 750–774, 796–818, 819–842, and 861–887; these read HALI…LLGE, PNIV…AFLD, LKEV…DFNP, INLV…DKDT, AEKL…MKKM, MLAF…EMNL, ISLK…PLIS, DNIE…KLQR, LKAL…EIDI, SFLN…SVQY, and LSQL…NLQC. Residues 1162–1195 are disordered; it reads TEGVDGRVKKKKKTRMDNGRPKKKQRSGRDDNQT. The Nuclear localization signal motif lies at 1170 to 1177; sequence KKKKKTRM.

Interacts with EDS1.

The protein localises to the nucleus. It carries out the reaction NAD(+) + H2O = ADP-D-ribose + nicotinamide + H(+). Its function is as follows. Disease resistance (R) protein that specifically recognizes the AvrRps4 type III effector avirulence protein from Pseudomonas syringae. Resistance proteins guard the plant against pathogens that contain an appropriate avirulence protein via an indirect interaction with this avirulence protein. That triggers a defense system including the hypersensitive response, which restricts the pathogen growth. The combined presence of both regular and alternative RPS4 transcripts with truncated open reading frames (ORFs) is necessary for function. RPS4 function is regulated at multiple levels, including gene expression, alternative splicing, and protein stability. Acts as a disease resistance protein involved in resistance to fungal and bacterial pathogens, including R.solanacearum, P.syringae pv. tomato and C.higginsianum. In presence of RRS1, elicites an EDS1-dependent hypersensitive response. In Arabidopsis thaliana (Mouse-ear cress), this protein is Disease resistance protein RPS4.